Consider the following 364-residue polypeptide: Chorismate synthase (364 aa).

Arg47 is an NADP(+) binding site. Residues 125–127 (RAS), Gly288, 303–307 (KPTAT), and Arg329 each bind FMN.

This sequence belongs to the chorismate synthase family. In terms of assembly, homotetramer. It depends on FMNH2 as a cofactor.

It catalyses the reaction 5-O-(1-carboxyvinyl)-3-phosphoshikimate = chorismate + phosphate. Its pathway is metabolic intermediate biosynthesis; chorismate biosynthesis; chorismate from D-erythrose 4-phosphate and phosphoenolpyruvate: step 7/7. Functionally, catalyzes the anti-1,4-elimination of the C-3 phosphate and the C-6 proR hydrogen from 5-enolpyruvylshikimate-3-phosphate (EPSP) to yield chorismate, which is the branch point compound that serves as the starting substrate for the three terminal pathways of aromatic amino acid biosynthesis. This reaction introduces a second double bond into the aromatic ring system. In Synechococcus sp. (strain CC9605), this protein is Chorismate synthase.